The primary structure comprises 104 residues: Protein MHF2 homolog (104 aa).

It belongs to the CENP-X/MHF2 family.

The protein localises to the nucleus. In terms of biological role, acts in the same pathway as FANCM to restrain class II meiotic crossing over (CO), and acts with FANCM during meiosis to repair interstrand cross-links (ICLs). In Arabidopsis thaliana (Mouse-ear cress), this protein is Protein MHF2 homolog.